Consider the following 81-residue polypeptide: Large ribosomal subunit protein bL27 (81 aa).

Residues 1–11 (MATSKSGGSSK) are compositionally biased toward polar residues. A disordered region spans residues 1 to 26 (MATSKSGGSSKNGRDSISKRLGVKRS).

This sequence belongs to the bacterial ribosomal protein bL27 family.

The protein is Large ribosomal subunit protein bL27 of Borrelia turicatae (strain 91E135).